Here is a 1049-residue protein sequence, read N- to C-terminus: RIMS-binding protein 2 (1049 aa).

The 68-residue stretch at 164-231 folds into the SH3 1 domain; the sequence is GKVHLCVARY…PSNFVDFIQD (68 aa). 3 consecutive Fibronectin type-III domains span residues 294–387, 390–471, and 486–587; these read VPYP…GKDV, APSQ…EKDE, and PPQD…VPPA. Disordered regions lie at residues 580 to 664, 694 to 714, and 728 to 750; these read PDLL…VSTT, SAGPYANSDEEDGYASPEVKR, and LGQQPHCCHGDEYHTESSRGSDL. Over residues 582 to 598 the composition is skewed to pro residues; sequence LLVPPAPHPRTAPPPKP. The segment covering 603–616 has biased composition (basic and acidic residues); it reads MDTKDLGPHVKVDE. The segment covering 641-651 has biased composition (low complexity); the sequence is GPGRRSPSPSR. A phosphoserine mark is found at serine 701 and serine 709. Residues 735-746 are compositionally biased toward basic and acidic residues; sequence CHGDEYHTESSR. A phosphoserine mark is found at serine 832 and serine 839. Threonine 841 carries the post-translational modification Phosphothreonine. SH3 domains follow at residues 848–916 and 952–1019; these read LPAR…EIHA and VPTR…EVPD. The interval 1024–1049 is disordered; that stretch reads HLSDAPPHYSHDPPMRTKAKRVSQPP. A compositionally biased stretch (basic residues) spans 1040-1049; it reads TKAKRVSQPP.

This sequence belongs to the RIMBP family. As to quaternary structure, interacts with CACNA1D and CACNA1B, and potentially with other Ca(2+) channel alpha-1 isoforms. Interacts with RIMS1 and RIMS2.

The protein resides in the cell membrane. The protein localises to the synapse. Functionally, plays a role in the synaptic transmission as bifunctional linker that interacts simultaneously with RIMS1, RIMS2, CACNA1D and CACNA1B. This chain is RIMS-binding protein 2 (Rimbp2), found in Rattus norvegicus (Rat).